The following is a 274-amino-acid chain: NAD-dependent protein deacetylase (274 aa).

The 274-residue stretch at methionine 1–proline 274 folds into the Deacetylase sirtuin-type domain. NAD(+) contacts are provided by residues glycine 26–lysine 46 and glutamine 104–aspartate 107. The Proton acceptor role is filled by histidine 122. Zn(2+)-binding residues include cysteine 130, cysteine 133, cysteine 181, and cysteine 184. NAD(+) contacts are provided by residues glycine 221 to serine 223, asparagine 247 to glycine 249, and cysteine 265.

Belongs to the sirtuin family. Class II subfamily. Zn(2+) is required as a cofactor.

It is found in the cytoplasm. The enzyme catalyses N(6)-acetyl-L-lysyl-[protein] + NAD(+) + H2O = 2''-O-acetyl-ADP-D-ribose + nicotinamide + L-lysyl-[protein]. Its function is as follows. NAD-dependent protein deacetylase which modulates the activities of several enzymes which are inactive in their acetylated form. The sequence is that of NAD-dependent protein deacetylase from Bordetella pertussis (strain Tohama I / ATCC BAA-589 / NCTC 13251).